Consider the following 147-residue polypeptide: Transcriptional regulator MraZ (147 aa).

2 consecutive SpoVT-AbrB domains span residues 5–47 (QQLR…SEKE) and 76–123 (TFEI…SKSK).

Belongs to the MraZ family. Forms oligomers.

Its subcellular location is the cytoplasm. The protein resides in the nucleoid. This is Transcriptional regulator MraZ from Mycoplasmopsis synoviae (strain 53) (Mycoplasma synoviae).